We begin with the raw amino-acid sequence, 768 residues long: Actin filament-associated protein 1-like 1 (768 aa).

The segment at 83–145 (LRDMSDDGEP…GKSPEYISSH (63 aa)) is disordered. Phosphoserine is present on residues Ser87, Ser93, Ser97, Ser103, and Ser153. A compositionally biased stretch (polar residues) spans 165 to 185 (SYPTTRMNGELKNSYNDSDAM). Residues 165–211 (SYPTTRMNGELKNSYNDSDAMSSSYESYDEEEEEEKGRQPKHQWPSE) form a disordered region. In terms of domain architecture, PH 1 spans 220–316 (DCRICAFLLR…WLKVIREVSR (97 aa)). Ser329 and Ser343 each carry phosphoserine. Residues 340–349 (KRLSQEKQNS) are compositionally biased toward basic and acidic residues. The interval 340-382 (KRLSQEKQNSDSDSLGMNDSGSTLGRREACEHGKGKKNSLAEL) is disordered. Residues 350-362 (DSDSLGMNDSGST) are compositionally biased toward polar residues. Residues 418–512 (EVPCCGYLNV…WLGLLLVEMG (95 aa)) enclose the PH 2 domain. Tyr557 is subject to Phosphotyrosine. Residues 564–609 (KVQDEEPQRPTGAQVKRHASSCSEKSHRADPQVKVKRHASSANQYK) are disordered. Basic and acidic residues predominate over residues 587–596 (EKSHRADPQV). A coiled-coil region spans residues 611 to 701 (GKNRAEEDAR…AVKERLQQSL (91 aa)). A disordered region spans residues 705–768 (PALGLSVSNK…KAKEWEMKKT (64 aa)). Positions 710 to 734 (SVSNKNKSQDTTNKPQSNAPEQSLP) are enriched in polar residues. Ser747 carries the post-translational modification Phosphoserine. The span at 759–768 (KAKEWEMKKT) shows a compositional bias: basic and acidic residues.

Interacts with CTTN.

Its subcellular location is the cytoplasm. It is found in the cell projection. It localises to the podosome. The protein resides in the invadopodium. The protein localises to the cytoskeleton. Its subcellular location is the stress fiber. Its function is as follows. May be involved in podosome and invadosome formation. This chain is Actin filament-associated protein 1-like 1 (Afap1l1), found in Mus musculus (Mouse).